Here is a 121-residue protein sequence, read N- to C-terminus: Large ribosomal subunit protein uL22 (121 aa).

The protein belongs to the universal ribosomal protein uL22 family. Part of the 50S ribosomal subunit.

This protein binds specifically to 23S rRNA; its binding is stimulated by other ribosomal proteins, e.g. L4, L17, and L20. It is important during the early stages of 50S assembly. It makes multiple contacts with different domains of the 23S rRNA in the assembled 50S subunit and ribosome. Its function is as follows. The globular domain of the protein is located near the polypeptide exit tunnel on the outside of the subunit, while an extended beta-hairpin is found that lines the wall of the exit tunnel in the center of the 70S ribosome. This Micrococcus luteus (strain ATCC 4698 / DSM 20030 / JCM 1464 / CCM 169 / CCUG 5858 / IAM 1056 / NBRC 3333 / NCIMB 9278 / NCTC 2665 / VKM Ac-2230) (Micrococcus lysodeikticus) protein is Large ribosomal subunit protein uL22.